The following is an 825-amino-acid chain: Protein SEY1 homolog 2 (825 aa).

The interval 1-21 is disordered; sequence MDEVSPTKHFTSKPLLPTKTP. Topologically, residues 1 to 728 are cytoplasmic; that stretch reads MDEVSPTKHF…EKENSEIKYQ (728 aa). The GB1/RHD3-type G domain maps to 83–305; it reads GMDYNAVGIL…FLPQYNKEIP (223 aa). 93–100 lines the GTP pocket; the sequence is GAQSSGKS. A coiled-coil region spans residues 373–397; the sequence is KVFTKQIDAALERYKEVTERYMETI. A helical transmembrane segment spans residues 729-749; the sequence is IPLYLIVLVVFFGFDEFIAIL. The Lumenal portion of the chain corresponds to 750 to 752; sequence TNP. The chain crosses the membrane as a helical span at residues 753 to 773; it reads LLFILTLIIGGGVYIGYKLNL. The Cytoplasmic portion of the chain corresponds to 774–825; it reads GGVAKNYIQYLLSMSLSSTMEYLRTIPFFTPLIDKVWPKDDNNTEETQEEIK.

Belongs to the TRAFAC class dynamin-like GTPase superfamily. GB1/RHD3 GTPase family. RHD3 subfamily.

It localises to the endoplasmic reticulum membrane. Functionally, probable GTP-binding protein that may be involved in cell development. This Entamoeba histolytica (strain ATCC 30459 / HM-1:IMSS / ABRM) protein is Protein SEY1 homolog 2.